The following is an 83-amino-acid chain: Hainantoxin-III 5 (83 aa).

The N-terminal stretch at 1-21 (MKASRFLALAGLVLLFVVGYA) is a signal peptide. A propeptide spanning residues 22 to 48 (SESEEKEFPRELLSKIFAVDDFKGEER) is cleaved from the precursor. Intrachain disulfides connect Cys50–Cys65, Cys57–Cys70, and Cys64–Cys77. Position 81 is a leucine amide (Leu81).

It belongs to the neurotoxin 10 (Hwtx-1) family. 15 (Hntx-3) subfamily. Monomer. As to expression, expressed by the venom gland.

The protein localises to the secreted. In terms of biological role, selective antagonist of neuronal tetrodotoxin (TTX)-sensitive voltage-gated sodium channels (IC(50)=1270 nM on Nav1.1/SCN1A, 270 nM on Nav1.2/SCN2A, 491 nM on Nav1.3/SCN3A and 232 nM on Nav1.7/SCN9A). This toxin suppress Nav1.7 current amplitude without significantly altering the activation, inactivation, and repriming kinetics. Short extreme depolarizations partially activate the toxin-bound channel, indicating voltage-dependent inhibition of this toxin. This toxin increases the deactivation of the Nav1.7 current after extreme depolarizations. The toxin-Nav1.7 complex is gradually dissociated upon prolonged strong depolarizations in a voltage-dependent manner, and the unbound toxin rebinds to Nav1.7 after a long repolarization. Moreover, analysis of chimeric channels showed that the DIIS3-S4 linker is critical for toxin binding to Nav1.7. These data are consistent with this toxin interacting with Nav1.7 site 4 and trapping the domain II voltage sensor in the closed state. In Cyriopagopus hainanus (Chinese bird spider), this protein is Hainantoxin-III 5.